Reading from the N-terminus, the 213-residue chain is CASP-like protein 2A1 (213 aa).

At 1 to 41 the chain is on the cytoplasmic side; the sequence is MSKMAEEKAAAVGGLGGAGAADAAQQQQLAAGEAAAARVRP. The helical transmembrane segment at 42 to 62 threads the bilayer; the sequence is VETLLRAAPLGLCVAAMTVML. Residues 63–83 lie on the Extracellular side of the membrane; sequence RNQQSNEYGAVAYSDLGGFKY. Residues 84–104 form a helical membrane-spanning segment; the sequence is LVYANGLCAAYSLVSAFYTAV. Topologically, residues 105-113 are cytoplasmic; it reads PRPATVSRS. A helical transmembrane segment spans residues 114-134; that stretch reads WLVFLLDQVFTYLILAAGAAA. At 135-166 the chain is on the extracellular side; sequence AELLYLAYNGDKEVTWSEACGVFGSFCRQART. Residues 167–187 form a helical membrane-spanning segment; that stretch reads SVAITFGTVLCFILLSLISSY. Residues 188 to 213 lie on the Cytoplasmic side of the membrane; that stretch reads RLFSAYEAPPSSALGSKGVEIAAYPR.

The protein belongs to the Casparian strip membrane proteins (CASP) family. In terms of assembly, homodimer and heterodimers.

The protein resides in the cell membrane. This chain is CASP-like protein 2A1, found in Zea mays (Maize).